A 428-amino-acid polypeptide reads, in one-letter code: MSEFEPIRGMKDYYGEELNKIKFIEETFRTVVLNSGYQEVYTPIVEDFKLFSLKSGEEIRKTMYVFKDKADREVALRPEITPSIVRVYLNSMQHLPKPLRLFYVGQVYRYDEPQFGRYREFRQAGVELLGSSSSFADIEVISLLNEIYDSLGLKDKIIIKINNIGIYREIFNKAGITEEQQEHLLHLIDKGKVDDALKEFTDNNYKDLITYLISLKFDKLESDKLESLRREVSKYNFNLEGEINKLSFISEVLEDLGVKIKIDLGFVRGLAYYTGVIFEVIHPDVSFSIAGGGRYDNLVRLYGGADTPAIGFAIGVERTALVINKIKSDLQRKKIAVIPLISTKDSLSLAIRLLNILRKNNIIGVLNLKDVPLSKLMTYYVEEGYNAIVLIGKKELEENSITIKFLEKREQKTVKLEKIEDVLINNLS.

The protein belongs to the class-II aminoacyl-tRNA synthetase family.

The protein localises to the cytoplasm. The enzyme catalyses tRNA(His) + L-histidine + ATP = L-histidyl-tRNA(His) + AMP + diphosphate + H(+). This Sulfolobus acidocaldarius (strain ATCC 33909 / DSM 639 / JCM 8929 / NBRC 15157 / NCIMB 11770) protein is Histidine--tRNA ligase.